The chain runs to 245 residues: 5-oxoprolinase subunit A (245 aa).

This sequence belongs to the LamB/PxpA family. In terms of assembly, forms a complex composed of PxpA, PxpB and PxpC.

The catalysed reaction is 5-oxo-L-proline + ATP + 2 H2O = L-glutamate + ADP + phosphate + H(+). Catalyzes the cleavage of 5-oxoproline to form L-glutamate coupled to the hydrolysis of ATP to ADP and inorganic phosphate. This Erwinia tasmaniensis (strain DSM 17950 / CFBP 7177 / CIP 109463 / NCPPB 4357 / Et1/99) protein is 5-oxoprolinase subunit A.